We begin with the raw amino-acid sequence, 165 residues long: ATP synthase subunit delta, mitochondrial (165 aa).

Residues 1–27 (MNSLRIARAALRVRPTAVRAPLQRRGY) constitute a mitochondrion transit peptide.

The protein belongs to the ATPase epsilon chain family. In terms of assembly, F-type ATPases have 2 components, CF(1) - the catalytic core - and CF(0) - the membrane proton channel. CF(1) has five subunits: alpha(3), beta(3), gamma(1), delta(1), epsilon(1). CF(0) has three main subunits: a, b and c.

The protein resides in the mitochondrion. Its subcellular location is the mitochondrion inner membrane. Its function is as follows. Mitochondrial membrane ATP synthase (F(1)F(0) ATP synthase or Complex V) produces ATP from ADP in the presence of a proton gradient across the membrane which is generated by electron transport complexes of the respiratory chain. F-type ATPases consist of two structural domains, F(1) - containing the extramembraneous catalytic core, and F(0) - containing the membrane proton channel, linked together by a central stalk and a peripheral stalk. During catalysis, ATP turnover in the catalytic domain of F(1) is coupled via a rotary mechanism of the central stalk subunits to proton translocation. Part of the complex F(1) domain and of the central stalk which is part of the complex rotary element. Rotation of the central stalk against the surrounding alpha(3)beta(3) subunits leads to hydrolysis of ATP in three separate catalytic sites on the beta subunits. The protein is ATP synthase subunit delta, mitochondrial (des) of Neurospora crassa (strain ATCC 24698 / 74-OR23-1A / CBS 708.71 / DSM 1257 / FGSC 987).